The sequence spans 952 residues: UvrABC system protein A (952 aa).

38 to 45 is a binding site for ATP; that stretch reads GLSGSGKS. The C4-type zinc-finger motif lies at 258 to 285; that stretch reads CNECGFSIPELEPRFFSFNSPVGACKSC. ABC transporter domains are found at residues 315–596 and 616–945; these read FRSV…KKSI and GNGK…LFLE. 648–655 contributes to the ATP binding site; the sequence is GVSGSGKS. The C4-type zinc finger occupies 747–773; that stretch reads CENCSGDGLIKIEMHFLPDVFVKCESC.

It belongs to the ABC transporter superfamily. UvrA family. As to quaternary structure, forms a heterotetramer with UvrB during the search for lesions.

The protein resides in the cytoplasm. In terms of biological role, the UvrABC repair system catalyzes the recognition and processing of DNA lesions. UvrA is an ATPase and a DNA-binding protein. A damage recognition complex composed of 2 UvrA and 2 UvrB subunits scans DNA for abnormalities. When the presence of a lesion has been verified by UvrB, the UvrA molecules dissociate. The chain is UvrABC system protein A from Malacoplasma penetrans (strain HF-2) (Mycoplasma penetrans).